We begin with the raw amino-acid sequence, 450 residues long: Phosphoglucosamine mutase (450 aa).

The active-site Phosphoserine intermediate is Ser-97. Mg(2+) is bound by residues Ser-97, Asp-236, Asp-238, and Asp-240. Ser-97 carries the phosphoserine modification.

It belongs to the phosphohexose mutase family. It depends on Mg(2+) as a cofactor. Activated by phosphorylation.

It carries out the reaction alpha-D-glucosamine 1-phosphate = D-glucosamine 6-phosphate. Functionally, catalyzes the conversion of glucosamine-6-phosphate to glucosamine-1-phosphate. The protein is Phosphoglucosamine mutase of Prochlorococcus marinus (strain MIT 9215).